A 362-amino-acid polypeptide reads, in one-letter code: Heat-inducible transcription repressor HrcA (362 aa).

Belongs to the HrcA family.

In terms of biological role, negative regulator of class I heat shock genes (grpE-dnaK-dnaJ and groELS operons). Prevents heat-shock induction of these operons. The sequence is that of Heat-inducible transcription repressor HrcA from Bradyrhizobium diazoefficiens (strain JCM 10833 / BCRC 13528 / IAM 13628 / NBRC 14792 / USDA 110).